The following is a 362-amino-acid chain: Peptide chain release factor 1 (362 aa).

Gln-237 bears the N5-methylglutamine mark.

This sequence belongs to the prokaryotic/mitochondrial release factor family. In terms of processing, methylated by PrmC. Methylation increases the termination efficiency of RF1.

It is found in the cytoplasm. In terms of biological role, peptide chain release factor 1 directs the termination of translation in response to the peptide chain termination codons UAG and UAA. In Marinomonas sp. (strain MWYL1), this protein is Peptide chain release factor 1.